Here is a 360-residue protein sequence, read N- to C-terminus: Sphingolipid delta(4)-desaturase (360 aa).

3 helical membrane-spanning segments follow: residues 67–87 (AVVLLQLSIAYALKNTPVLSF), 89–109 (FLALAYVVGATANQNCFLCIH), and 125–145 (LFAIWVNLPIGVPYSASFQPY). Positions 109 to 113 (HELSH) match the Histidine box-1 motif. Residues 146 to 150 (HQLHH) carry the Histidine box-2 motif. 3 helical membrane-spanning segments follow: residues 170–190 (VLSSLLGKAFFATFQIFFYAL), 202–222 (FIHLLNVLVCLVSDFILIKFG), and 228–248 (WYLILSSFFAGSLHPTAGHFI). The Histidine box-3 motif lies at 288 to 292 (HNEHH).

Belongs to the fatty acid desaturase type 1 family. DEGS subfamily.

It is found in the membrane. The catalysed reaction is an N-acylsphinganine + 2 Fe(II)-[cytochrome b5] + O2 + 2 H(+) = an N-acylsphing-4-enine + 2 Fe(III)-[cytochrome b5] + 2 H2O. The protein operates within lipid metabolism; sphingolipid metabolism. Its function is as follows. Delta(4)-fatty-acid desaturase which introduces a double bond at the 4-position in the long-chain base (LCB) of ceramides. Required for the formation of the monounsaturated sphingoid base (E)-sphing-4-enine during glucosylceramide (GluCer) biosynthesis. This chain is Sphingolipid delta(4)-desaturase, found in Komagataella phaffii (strain GS115 / ATCC 20864) (Yeast).